A 388-amino-acid chain; its full sequence is Type II secretion system protein F (388 aa).

Positions 1–28 are disordered; the sequence is MTEGDSARQVRQQLREQGLTPLEVNETT. Over 1–153 the chain is Cytoplasmic; it reads MTEGDSARQV…HMRTKLLQAM (153 aa). Ca(2+) contacts are provided by Glu-79, Asn-133, and Asp-137. Residues 154–174 form a helical membrane-spanning segment; it reads IYPIVLTLVAVGVISILLTAV. Residues 175-205 lie on the Periplasmic side of the membrane; that stretch reads VPKVVAQFEHMGQQLPATTRFLIGTSELMQH. A helical membrane pass occupies residues 206 to 226; it reads YGLWFLLLLFIGGFVWRWWLT. At 227–350 the chain is on the cytoplasmic side; it reads DEKRRRHWHQ…QDREFETQVN (124 aa). The helical transmembrane segment at 351-371 threads the bilayer; it reads IALGVFEPLLVVSMAGVVLFI. Over 372–388 the chain is Periplasmic; it reads VMSILQPILELNNMVNL.

This sequence belongs to the GSP F family. In terms of assembly, type II secretion system is composed of four main components: the outer membrane complex, the inner membrane complex, the cytoplasmic secretion ATPase and the periplasm-spanning pseudopilus. Homodimer. Interacts with ExeE and ExeL components.

The protein resides in the cell inner membrane. Component of the type II secretion system inner membrane complex required for the energy-dependent secretion of extracellular factors such as proteases and toxins from the periplasm. The chain is Type II secretion system protein F (exeF) from Aeromonas hydrophila.